The following is an 843-amino-acid chain: Protein P (843 aa).

A terminal protein domain (TP) region spans residues 1–177; it reads MPLSYQHFRR…FCGSPYSWEQ (177 aa). Residues 178–346 are spacer; the sequence is ELQHGSTSLN…YCLSHIINLL (169 aa). Disordered stretches follow at residues 180 to 202 and 226 to 315; these read QHGSTSLNGEKGHGTEPFCAQSS and QHKQ…VGSE. Over residues 239 to 249 the composition is skewed to basic residues; it reads RSGRLRSRVHT. Composition is skewed to polar residues over residues 262-277 and 287-299; these read TGHSDNLATRSTSCFH and PSLSTSKGHTSTG. The interval 347 to 690 is polymerase/reverse transcriptase domain (RT); sequence EDWGPCYEHG…YMNLYPVARQ (344 aa). The Reverse transcriptase domain maps to 357–600; it reads EHHIRTPKTP…YSLHFMGYII (244 aa). Residues aspartate 429, aspartate 551, and aspartate 552 each contribute to the Mg(2+) site.

Belongs to the hepadnaviridae P protein family.

It carries out the reaction DNA(n) + a 2'-deoxyribonucleoside 5'-triphosphate = DNA(n+1) + diphosphate. The enzyme catalyses Endonucleolytic cleavage to 5'-phosphomonoester.. Activated by host HSP70 and HSP40 in vitro to be able to bind the epsilon loop of the pgRNA. Because deletion of the RNase H region renders the protein partly chaperone-independent, the chaperones may be needed indirectly to relieve occlusion of the RNA-binding site by this domain. Inhibited by several reverse-transcriptase inhibitors: Lamivudine, Adefovir and Entecavir. Its function is as follows. Multifunctional enzyme that converts the viral RNA genome into dsDNA in viral cytoplasmic capsids. This enzyme displays a DNA polymerase activity that can copy either DNA or RNA templates, and a ribonuclease H (RNase H) activity that cleaves the RNA strand of RNA-DNA heteroduplexes in a partially processive 3'- to 5'-endonucleasic mode. Neo-synthesized pregenomic RNA (pgRNA) are encapsidated together with the P protein, and reverse-transcribed inside the nucleocapsid. Initiation of reverse-transcription occurs first by binding the epsilon loop on the pgRNA genome, and is initiated by protein priming, thereby the 5'-end of (-)DNA is covalently linked to P protein. Partial (+)DNA is synthesized from the (-)DNA template and generates the relaxed circular DNA (RC-DNA) genome. After budding and infection, the RC-DNA migrates in the nucleus, and is converted into a plasmid-like covalently closed circular DNA (cccDNA). The activity of P protein does not seem to be necessary for cccDNA generation, and is presumably released from (+)DNA by host nuclear DNA repair machinery. The sequence is that of Protein P from Hepatitis B virus genotype H (isolate United States/LAS2523/2002) (HBV-H).